Consider the following 208-residue polypeptide: Small ribosomal subunit protein uS4 (208 aa).

A disordered region spans residues 31-51; the sequence is SALDKRAYGPGQHGQRRAKTS. The 63-residue stretch at 98 to 160 folds into the S4 RNA-binding domain; the sequence is RRLDNVVYRM…TKSNSQVVRA (63 aa).

The protein belongs to the universal ribosomal protein uS4 family. As to quaternary structure, part of the 30S ribosomal subunit. Contacts protein S5. The interaction surface between S4 and S5 is involved in control of translational fidelity.

Its function is as follows. One of the primary rRNA binding proteins, it binds directly to 16S rRNA where it nucleates assembly of the body of the 30S subunit. With S5 and S12 plays an important role in translational accuracy. This Helicobacter pylori (strain ATCC 700392 / 26695) (Campylobacter pylori) protein is Small ribosomal subunit protein uS4.